Here is a 320-residue protein sequence, read N- to C-terminus: 4-diphosphocytidyl-2-C-methyl-D-erythritol kinase (320 aa).

The active site involves Lys26. Residue 111 to 121 (PVAGGMAGGSA) participates in ATP binding. Residue Asp153 is part of the active site.

The protein belongs to the GHMP kinase family. IspE subfamily.

The catalysed reaction is 4-CDP-2-C-methyl-D-erythritol + ATP = 4-CDP-2-C-methyl-D-erythritol 2-phosphate + ADP + H(+). The protein operates within isoprenoid biosynthesis; isopentenyl diphosphate biosynthesis via DXP pathway; isopentenyl diphosphate from 1-deoxy-D-xylulose 5-phosphate: step 3/6. Its function is as follows. Catalyzes the phosphorylation of the position 2 hydroxy group of 4-diphosphocytidyl-2C-methyl-D-erythritol. This is 4-diphosphocytidyl-2-C-methyl-D-erythritol kinase from Mycobacterium marinum (strain ATCC BAA-535 / M).